A 122-amino-acid chain; its full sequence is Large ribosomal subunit protein bL12 (122 aa).

The protein belongs to the bacterial ribosomal protein bL12 family. Homodimer. Part of the ribosomal stalk of the 50S ribosomal subunit. Forms a multimeric L10(L12)X complex, where L10 forms an elongated spine to which 2 to 4 L12 dimers bind in a sequential fashion. Binds GTP-bound translation factors.

In terms of biological role, forms part of the ribosomal stalk which helps the ribosome interact with GTP-bound translation factors. Is thus essential for accurate translation. The polypeptide is Large ribosomal subunit protein bL12 (Staphylococcus haemolyticus (strain JCSC1435)).